Here is a 396-residue protein sequence, read N- to C-terminus: Phosphoglycerate kinase (396 aa).

Residues 21–23, Arg-36, 59–62, Arg-118, and Arg-151 contribute to the substrate site; these read DFN and HLGR. Residues Lys-201, Gly-292, Glu-323, and 349–352 contribute to the ATP site; that span reads GGDS.

It belongs to the phosphoglycerate kinase family. As to quaternary structure, monomer.

It localises to the cytoplasm. The enzyme catalyses (2R)-3-phosphoglycerate + ATP = (2R)-3-phospho-glyceroyl phosphate + ADP. Its pathway is carbohydrate degradation; glycolysis; pyruvate from D-glyceraldehyde 3-phosphate: step 2/5. In Leptospira interrogans serogroup Icterohaemorrhagiae serovar copenhageni (strain Fiocruz L1-130), this protein is Phosphoglycerate kinase.